Reading from the N-terminus, the 172-residue chain is DNA-directed RNA polymerase II subunit RPB7 (172 aa).

Belongs to the eukaryotic RPB7/RPC8 RNA polymerase subunit family. As to quaternary structure, component of the RNA polymerase II (Pol II) core complex consisting of 12 subunits: a ten-subunit catalytic core composed of POLR2A/RPB1, POLR2B/RPB2, POLR2C/RPB3, POLR2I/RPB9, POLR2J/RPB11, POLR2E/RPABC1, POLR2F/RPABC2, POLR2H/RPABC3, POLR2K/RPABC4 and POLR2L/RPABC5 and a mobile stalk composed of two subunits POLR2D/RPB4 and POLR2G/RPB7, protruding from the core and functioning primarily in transcription initiation. Part of Pol II(G) complex, in which Pol II core associates with an additional subunit POLR2M; unlike conventional Pol II, Pol II(G) functions as a transcriptional repressor. Part of TBP-based Pol II pre-initiation complex (PIC), in which Pol II core assembles with general transcription factors and other specific initiation factors including GTF2E1, GTF2E2, GTF2F1, GTF2F2, TCEA1, ERCC2, ERCC3, GTF2H2, GTF2H3, GTF2H4, GTF2H5, GTF2A1, GTF2A2, GTF2B and TBP; this large multi-subunit PIC complex mediates DNA unwinding and targets Pol II core to the transcription start site where the first phosphodiester bond forms.

Its subcellular location is the nucleus. Its function is as follows. Core component of RNA polymerase II (Pol II), a DNA-dependent RNA polymerase which synthesizes mRNA precursors and many functional non-coding RNAs using the four ribonucleoside triphosphates as substrates. Pol II is the central component of the basal RNA polymerase II transcription machinery. It is composed of mobile elements that move relative to each other. POLR2G/RPB7 is part of a subcomplex with POLR2D/RPB4 that binds to a pocket formed by POLR2A/RPB1, POLR2B/RPB2 and POLR2F/RPABC2 at the base of the clamp element. The POLR2D/RPB4-POLR2G/RPB7 subcomplex seems to lock the clamp via POLR2G/RPB7 in the closed conformation thus preventing double-stranded DNA to enter the active site cleft. The POLR2D/RPB4-POLR2G/RPB7 subcomplex binds single-stranded DNA and RNA. In Bos taurus (Bovine), this protein is DNA-directed RNA polymerase II subunit RPB7 (POLR2G).